The sequence spans 627 residues: Membrane protein insertase YidC (627 aa).

The chain crosses the membrane as a helical span at residues 8-28 (LFLALILSMGIWMGVNYFFFP). The span at 33 to 57 (KKNTETKQTQSDKTSENTKQQITSG) shows a compositional bias: polar residues. A disordered region spans residues 33 to 68 (KKNTETKQTQSDKTSENTKQQITSGKTKESNSADPV). Over residues 58–68 (KTKESNSADPV) the composition is skewed to basic and acidic residues. Transmembrane regions (helical) follow at residues 417–437 (FTIPNYGWSIIIFAILFKLVF), 488–508 (VGGCLPMVIQIPIFIALYTAF), 536–556 (AIPYFTQTGIGLNLLALLMVG), and 575–595 (MLMYVMPVMMLYIFWNMPSGV).

Belongs to the OXA1/ALB3/YidC family. Type 1 subfamily. As to quaternary structure, interacts with the Sec translocase complex via SecD. Specifically interacts with transmembrane segments of nascent integral membrane proteins during membrane integration.

It is found in the cell inner membrane. Its function is as follows. Required for the insertion and/or proper folding and/or complex formation of integral membrane proteins into the membrane. Involved in integration of membrane proteins that insert both dependently and independently of the Sec translocase complex, as well as at least some lipoproteins. Aids folding of multispanning membrane proteins. This chain is Membrane protein insertase YidC, found in Leptospira interrogans serogroup Icterohaemorrhagiae serovar Lai (strain 56601).